Here is a 326-residue protein sequence, read N- to C-terminus: Acyl-CoA-binding domain-containing protein 4 (326 aa).

The ACB domain occupies 10 to 99 (CQKQFQAAVS…MKLVAQKVID (90 aa)). An acyl-CoA-binding positions include 21–30 (IQNLPKNGSY), 41–45 (YSYYK), Lys-67, and Tyr-86. 2 disordered regions span residues 147 to 170 (VQAA…SRLP) and 223 to 248 (KEAA…SLMG). At Ser-164 the chain carries Phosphoserine.

Its function is as follows. Binds medium- and long-chain acyl-CoA esters and may function as an intracellular carrier of acyl-CoA esters. The sequence is that of Acyl-CoA-binding domain-containing protein 4 (Acbd4) from Rattus norvegicus (Rat).